We begin with the raw amino-acid sequence, 241 residues long: High mobility group B protein 7 (241 aa).

2 stretches are compositionally biased toward polar residues: residues 1-11 (MAGPSTTSNAP) and 20-29 (ETSSNTSTTL). Disordered stretches follow at residues 1-30 (MAGP…TTLR), 75-116 (TQAE…NKPK), and 174-241 (EYNK…LDDY). The segment covering 77-90 (AEAKKKPAEKKKTT) has biased composition (basic and acidic residues). Residues 115–183 (PKRPLTAFFI…EYNKSLESND (69 aa)) constitute a DNA-binding region (HMG box). 2 stretches are compositionally biased toward acidic residues: residues 182-221 (NDAD…ENTD) and 229-241 (GKEE…LDDY).

It belongs to the HMGB family. Post-translationally, phosphorylated. In terms of tissue distribution, expressed at low levels in lateral roots, root tips, cotyledons, leaves and flowers (including pedicels, but excluding styles).

It is found in the nucleus. Binds preferentially double-stranded supercoiled DNA. Required for karyogamy during female gametophyte development, when the two polar nuclei fuse to form the diploid central cell nucleus. In Arabidopsis thaliana (Mouse-ear cress), this protein is High mobility group B protein 7 (HMGB7).